The following is a 228-amino-acid chain: Death domain-containing membrane protein NRADD (228 aa).

The Extracellular portion of the chain corresponds to 1 to 52 (MLYNVSKGVVYSDTALQGQDGDREGMWVGAGGALAPNTSSLFPPEPPGASSN). N-linked (GlcNAc...) asparagine glycans are attached at residues Asn-4 and Asn-37. A helical; Signal-anchor for type III membrane protein membrane pass occupies residues 53-73 (IIPVYCALLATVILGLLAYVA). Over 74 to 228 (FKCWRSHKQR…SSPAESSSVV (155 aa)) the chain is Cytoplasmic. The segment at 87–122 (AKARTVELGDPDRDQRRGDSNVFVDSPPSLEPCIPS) is disordered. Positions 90–105 (RTVELGDPDRDQRRGD) are enriched in basic and acidic residues. A Death domain is found at 143–222 (EEVQRLLMMG…DVVQVLSSPA (80 aa)).

As to quaternary structure, interacts with NGFR. Interacts with NTRK1. Interacts with SORT1. As to expression, detected in lung and testis.

It is found in the cell membrane. Its subcellular location is the nucleus. Modulates NTRK1 signaling. Can activate several intracellular signaling pathways, leading to activation of JUN. Promotes apoptosis. Promotes translocation of SORT1 to the cell membrane, and thereby hinders lysosomal degradation of SOTR1 and promotes its interaction with NGFR. The chain is Death domain-containing membrane protein NRADD (Nradd) from Mus musculus (Mouse).